A 154-amino-acid polypeptide reads, in one-letter code: MILTVKPLQGKECNVQVTEDEKVSTVKELVSERLNIPASQQRLLYKGKALADEHRLSDYSIGPEAKLNLVVRPAGERSGVAGMASSSSAVGGVWQTLSTVLAKHFSPADAAKVQEQLVKDYERSLRQLSMDDIERLAGRLLHPDSEGMDTSYMD.

A Ubiquitin-like domain is found at Met-1–Glu-76.

As to quaternary structure, component of the BAT3 complex.

It is found in the cytoplasm. Its subcellular location is the cytosol. Component of the BAT3 complex, a multiprotein complex involved in the post-translational delivery of tail-anchored (TA) membrane proteins to the endoplasmic reticulum membrane. TA membrane proteins, also named type II transmembrane proteins, contain a single C-terminal transmembrane region. This is Ubiquitin-like protein 4A-A (ubl4aa) from Oncorhynchus mykiss (Rainbow trout).